Consider the following 77-residue polypeptide: Large ribosomal subunit protein bL31 (77 aa).

The protein belongs to the bacterial ribosomal protein bL31 family. Type A subfamily. In terms of assembly, part of the 50S ribosomal subunit.

Its function is as follows. Binds the 23S rRNA. The polypeptide is Large ribosomal subunit protein bL31 (Paramagnetospirillum magneticum (strain ATCC 700264 / AMB-1) (Magnetospirillum magneticum)).